The sequence spans 843 residues: Glycogen phosphorylase, muscle form (843 aa).

The residue at position 2 (serine 2) is an N-acetylserine. Position 15 is a phosphoserine; by PHK; in form phosphorylase A (serine 15). 2 residues coordinate AMP: aspartate 43 and tyrosine 76. Phosphotyrosine occurs at positions 204 and 227. 310-319 provides a ligand contact to AMP; it reads RRFKSSKFGC. Phosphoserine is present on serine 430. Tyrosine 473 is subject to Phosphotyrosine. At serine 514 the chain carries Phosphoserine. At lysine 681 the chain carries N6-(pyridoxal phosphate)lysine. A phosphoserine mark is found at serine 747 and serine 748.

The protein belongs to the glycogen phosphorylase family. Homodimer. Homotetramer; to form the enzymatically active phosphorylase A. Pyridoxal 5'-phosphate serves as cofactor. In terms of processing, phosphorylation of Ser-15 converts phosphorylase B (unphosphorylated) to phosphorylase A.

It catalyses the reaction [(1-&gt;4)-alpha-D-glucosyl](n) + phosphate = [(1-&gt;4)-alpha-D-glucosyl](n-1) + alpha-D-glucose 1-phosphate. Allosterically regulated through the non-covalent binding of metabolites, being activated by AMP and inhibited by ATP, ADP, and glucose-6-phosphate. The activity is also controlled by post-translational modifications including phosphorylation. In terms of biological role, allosteric enzyme that catalyzes the rate-limiting step in glycogen catabolism, the phosphorolytic cleavage of glycogen to produce glucose-1-phosphate, and plays a central role in maintaining cellular and organismal glucose homeostasis. This Oryctolagus cuniculus (Rabbit) protein is Glycogen phosphorylase, muscle form.